The primary structure comprises 273 residues: L-cysteine S-thiosulfotransferase subunit SoxA (273 aa).

An N-terminal signal peptide occupies residues 1–24 (MKKTVTAVALLCALSSTAIAPTFA). A disulfide bridge connects residues Cys-74 and Cys-110. A Cytochrome c domain is found at 162-273 (EMYELGKRMF…GVMLTPGIKR (112 aa)). Residues Cys-182 and His-186 each contribute to the heme site. Arg-230 serves as a coordination point for substrate. Cys-234 contacts heme. Catalysis depends on Cys-234, which acts as the Cysteine persulfide intermediate.

This sequence belongs to the SoxA family. Heterodimer of SoxA and SoxX. Heme serves as cofactor. Cysteine persulfide at Cys-234.

It is found in the periplasm. It carries out the reaction L-cysteinyl-[SoxY protein] + thiosulfate + 2 Fe(III)-[cytochrome c] = S-sulfosulfanyl-L-cysteinyl-[SoxY protein] + 2 Fe(II)-[cytochrome c] + 2 H(+). It catalyses the reaction S-sulfanyl-L-cysteinyl-[SoxY protein] + thiosulfate + 2 Fe(III)-[cytochrome c] = S-(2-sulfodisulfanyl)-L-cysteinyl-[SoxY protein] + 2 Fe(II)-[cytochrome c] + 2 H(+). Functionally, C-type monoheme cytochrome, which is part of the SoxAX cytochrome complex involved in sulfur oxidation. The SoxAX complex catalyzes the formation of a heterodisulfide bond between the conserved cysteine residue on a sulfur carrier SoxYZ complex subunit SoxY and thiosulfate or other inorganic sulfur substrates. This leads to the liberation of two electrons, which may be transferred from the SoxAX complex to another cytochrome c that then channels them into the respiratory electron transport chain. Some electrons may be used for reductive CO(2) fixation. This Hydrogenophilus thermoluteolus (Pseudomonas hydrogenothermophila) protein is L-cysteine S-thiosulfotransferase subunit SoxA.